We begin with the raw amino-acid sequence, 311 residues long: Catabolite control protein B (311 aa).

In terms of domain architecture, HTH lacI-type spans 1–56 (MANIKEIARLANVSVSTVSRVLNHHPYVSEEKRKLVHQVMKELDYTPNRTAIDLIR). The segment at residues 4–23 (IKEIARLANVSVSTVSRVLN) is a DNA-binding region (H-T-H motif).

Seems to be complexed to phosphorylated HPr.

In terms of biological role, transcriptional regulator involved in catabolite repression of several operons. This Bacillus subtilis (strain 168) protein is Catabolite control protein B (ccpB).